A 622-amino-acid polypeptide reads, in one-letter code: Elongation factor 4 (622 aa).

Positions 17–198 constitute a tr-type G domain; the sequence is ELLRNFCIIA…QIVRQIPAPV (182 aa). Residues 29–34 and 145–148 contribute to the GTP site; these read DHGKST and NKID.

This sequence belongs to the TRAFAC class translation factor GTPase superfamily. Classic translation factor GTPase family. LepA subfamily.

It localises to the cell membrane. The enzyme catalyses GTP + H2O = GDP + phosphate + H(+). Its function is as follows. Required for accurate and efficient protein synthesis under certain stress conditions. May act as a fidelity factor of the translation reaction, by catalyzing a one-codon backward translocation of tRNAs on improperly translocated ribosomes. Back-translocation proceeds from a post-translocation (POST) complex to a pre-translocation (PRE) complex, thus giving elongation factor G a second chance to translocate the tRNAs correctly. Binds to ribosomes in a GTP-dependent manner. This chain is Elongation factor 4, found in Kineococcus radiotolerans (strain ATCC BAA-149 / DSM 14245 / SRS30216).